Consider the following 442-residue polypeptide: DNA topoisomerase 6 subunit A3 (442 aa).

The segment at 1-34 is disordered; it reads MSEKKRRGGAGAGAASGSASKKPRVSTAASYAES. The 134-residue stretch at 91–224 folds into the Topo IIA-type catalytic domain; that stretch reads QDSASVTSRI…LHVVASEKGV (134 aa). The active-site O-(5'-phospho-DNA)-tyrosine intermediate is tyrosine 185. Mg(2+) contacts are provided by glutamate 271 and aspartate 323.

This sequence belongs to the TOP6A family. As to quaternary structure, homodimer. Heterotetramer of two TOP6A and two TOP6B subunits. Interacts with TOP6B. It depends on Mg(2+) as a cofactor. Highly expressed in flowers before pollination. Expressed in roots and shoots.

It is found in the nucleus. The enzyme catalyses ATP-dependent breakage, passage and rejoining of double-stranded DNA.. Component of the DNA topoisomerase VI involved in chromatin organization and progression of endoreduplication cycles. Relaxes both positive and negative superturns and exhibits a strong decatenase activity. May be involved in cell proliferation and stress tolerance. In Oryza sativa subsp. indica (Rice), this protein is DNA topoisomerase 6 subunit A3.